A 164-amino-acid chain; its full sequence is Ribosome maturation factor RimM (164 aa).

A PRC barrel domain is found at 90–161 (KGSYFIADLI…TVTIKPLEIW (72 aa)).

This sequence belongs to the RimM family. Binds ribosomal protein uS19.

Its subcellular location is the cytoplasm. In terms of biological role, an accessory protein needed during the final step in the assembly of 30S ribosomal subunit, possibly for assembly of the head region. Essential for efficient processing of 16S rRNA. May be needed both before and after RbfA during the maturation of 16S rRNA. It has affinity for free ribosomal 30S subunits but not for 70S ribosomes. The chain is Ribosome maturation factor RimM from Clostridium botulinum (strain Langeland / NCTC 10281 / Type F).